The chain runs to 406 residues: Erythromycin esterase type I (406 aa).

Functionally, this enzyme confers resistance to erythromycin through inactivation by hydrolyzing the lactone ring of the antibiotic. This is Erythromycin esterase type I (ereA) from Escherichia coli.